The sequence spans 427 residues: Ectonucleoside triphosphate diphosphohydrolase 5 (427 aa).

The N-terminal stretch at 1–24 (MATSWGAVFMLIIACVGSTVFYRE) is a signal peptide. The active-site Proton acceptor is E171. N231 is a glycosylation site (N-linked (GlcNAc...) asparagine). Intrachain disulfides connect C271–C302 and C362–C376.

Belongs to the GDA1/CD39 NTPase family. Monomer; active form. Homodimer; disulfide-linked. Homodimers are enzymatically inactive. Requires Ca(2+) as cofactor. It depends on Mg(2+) as a cofactor. Post-translationally, N-glycosylated; high-mannose type. As to expression, ubiquitous.

Its subcellular location is the endoplasmic reticulum. The protein localises to the secreted. The enzyme catalyses a ribonucleoside 5'-diphosphate + H2O = a ribonucleoside 5'-phosphate + phosphate + H(+). It catalyses the reaction GDP + H2O = GMP + phosphate + H(+). The catalysed reaction is UDP + H2O = UMP + phosphate + H(+). It carries out the reaction IDP + H2O = IMP + phosphate + H(+). The enzyme catalyses CDP + H2O = CMP + phosphate + H(+). It catalyses the reaction ADP + H2O = AMP + phosphate + H(+). Its pathway is protein modification; protein glycosylation. Hydrolyzes nucleoside diphosphates with a preference for GDP, IDP and UDP compared to ADP and CDP. In the lumen of the endoplasmic reticulum, hydrolyzes UDP that acts as an end-product feedback inhibitor of the UDP-Glc:glycoprotein glucosyltransferases. UMP can be transported back by an UDP-sugar antiporter to the cytosol where it is consumed to regenerate UDP-glucose. Therefore, it positively regulates protein reglucosylation by clearing UDP from the ER lumen and by promoting the regeneration of UDP-glucose. Protein reglucosylation is essential to proper glycoprotein folding and quality control in the ER. This is Ectonucleoside triphosphate diphosphohydrolase 5 (Entpd5) from Mus musculus (Mouse).